The sequence spans 388 residues: ATP phosphoribosyltransferase regulatory subunit (388 aa).

This sequence belongs to the class-II aminoacyl-tRNA synthetase family. HisZ subfamily. In terms of assembly, heteromultimer composed of HisG and HisZ subunits.

The protein resides in the cytoplasm. The protein operates within amino-acid biosynthesis; L-histidine biosynthesis; L-histidine from 5-phospho-alpha-D-ribose 1-diphosphate: step 1/9. In terms of biological role, required for the first step of histidine biosynthesis. May allow the feedback regulation of ATP phosphoribosyltransferase activity by histidine. The polypeptide is ATP phosphoribosyltransferase regulatory subunit (Acinetobacter baylyi (strain ATCC 33305 / BD413 / ADP1)).